A 466-amino-acid polypeptide reads, in one-letter code: 3-isopropylmalate dehydratase large subunit 1 (466 aa).

The [4Fe-4S] cluster site is built by C347, C407, and C410.

It belongs to the aconitase/IPM isomerase family. LeuC type 1 subfamily. Heterodimer of LeuC and LeuD. The cofactor is [4Fe-4S] cluster.

It carries out the reaction (2R,3S)-3-isopropylmalate = (2S)-2-isopropylmalate. It participates in amino-acid biosynthesis; L-leucine biosynthesis; L-leucine from 3-methyl-2-oxobutanoate: step 2/4. Catalyzes the isomerization between 2-isopropylmalate and 3-isopropylmalate, via the formation of 2-isopropylmaleate. The sequence is that of 3-isopropylmalate dehydratase large subunit 1 from Salmonella choleraesuis (strain SC-B67).